The sequence spans 184 residues: Photosystem I assembly protein Ycf4 (184 aa).

Transmembrane regions (helical) follow at residues 20–42 and 57–79; these read VNLC…GFSS and IAFI…LGLY.

Belongs to the Ycf4 family.

Its subcellular location is the plastid. The protein localises to the chloroplast thylakoid membrane. Functionally, seems to be required for the assembly of the photosystem I complex. The protein is Photosystem I assembly protein Ycf4 of Adiantum capillus-veneris (Maidenhair fern).